Here is a 450-residue protein sequence, read N- to C-terminus: Oxygen-independent coproporphyrinogen III oxidase (450 aa).

Positions 42–276 constitute a Radical SAM core domain; sequence LPAGASASLY…CAIANALKEA (235 aa). Y51 contacts S-adenosyl-L-methionine. [4Fe-4S] cluster is bound by residues C57 and C61. Y63 lines the S-adenosyl-L-methionine pocket. C64 provides a ligand contact to [4Fe-4S] cluster. S-adenosyl-L-methionine contacts are provided by residues G108, 109-110, E141, Q168, R180, D205, A239, and I325; that span reads GT.

Belongs to the anaerobic coproporphyrinogen-III oxidase family. As to quaternary structure, monomer. [4Fe-4S] cluster serves as cofactor.

It is found in the cytoplasm. It carries out the reaction coproporphyrinogen III + 2 S-adenosyl-L-methionine = protoporphyrinogen IX + 2 5'-deoxyadenosine + 2 L-methionine + 2 CO2. The protein operates within porphyrin-containing compound metabolism; protoporphyrin-IX biosynthesis; protoporphyrinogen-IX from coproporphyrinogen-III (AdoMet route): step 1/1. Functionally, involved in the heme biosynthesis. Catalyzes the anaerobic oxidative decarboxylation of propionate groups of rings A and B of coproporphyrinogen III to yield the vinyl groups in protoporphyrinogen IX. The chain is Oxygen-independent coproporphyrinogen III oxidase (hemN) from Bradyrhizobium diazoefficiens (strain JCM 10833 / BCRC 13528 / IAM 13628 / NBRC 14792 / USDA 110).